Consider the following 194-residue polypeptide: Probable GTP-binding protein EngB (194 aa).

The EngB-type G domain maps to aspartate 23–asparagine 194. Residues glycine 31–serine 38, glycine 58–leucine 62, aspartate 76–glycine 79, threonine 142–aspartate 145, and histidine 173–serine 175 contribute to the GTP site. Positions 38 and 60 each coordinate Mg(2+).

The protein belongs to the TRAFAC class TrmE-Era-EngA-EngB-Septin-like GTPase superfamily. EngB GTPase family. Requires Mg(2+) as cofactor.

Functionally, necessary for normal cell division and for the maintenance of normal septation. The polypeptide is Probable GTP-binding protein EngB (Fusobacterium nucleatum subsp. nucleatum (strain ATCC 25586 / DSM 15643 / BCRC 10681 / CIP 101130 / JCM 8532 / KCTC 2640 / LMG 13131 / VPI 4355)).